The primary structure comprises 546 residues: Probable protein kinase UbiB (546 aa).

The 379-residue stretch at 124-502 folds into the Protein kinase domain; the sequence is DFEIKPLASA…HVRQGQSRYF (379 aa). Residues 130-138 and K153 each bind ATP; that span reads LASASIAQV. The Proton acceptor role is filled by D288. The next 2 helical transmembrane spans lie at 501-521 and 522-542; these read YFLG…VSRP and EWGL…FVGW.

Belongs to the ABC1 family. UbiB subfamily.

Its subcellular location is the cell inner membrane. Its pathway is cofactor biosynthesis; ubiquinone biosynthesis [regulation]. In terms of biological role, is probably a protein kinase regulator of UbiI activity which is involved in aerobic coenzyme Q (ubiquinone) biosynthesis. The chain is Probable protein kinase UbiB from Escherichia coli (strain SMS-3-5 / SECEC).